The following is a 96-amino-acid chain: Protein Vpr (96 aa).

A homooligomerization region spans residues 1–42; the sequence is MEQAPEDQGPQREPYNDWTLELLEELKNEAVRHFPRIWLHSL. Phosphoserine; by host is present on residues Ser79, Ser94, and Ser96.

The protein belongs to the HIV-1 VPR protein family. In terms of assembly, homooligomer, may form homodimer. Interacts with p6-gag region of the Pr55 Gag precursor protein through a (Leu-X-X)4 motif near the C-terminus of the P6gag protein. Interacts with host UNG. May interact with host RAD23A/HHR23A. Interacts with host VPRBP/DCAF1, leading to hijack the CUL4A-RBX1-DDB1-DCAF1/VPRBP complex, mediating ubiquitination of host proteins such as TERT and ZGPAT and arrest of the cell cycle in G2 phase. Post-translationally, phosphorylated on several residues by host. These phosphorylations regulate VPR activity for the nuclear import of the HIV-1 pre-integration complex.

The protein resides in the virion. Its subcellular location is the host nucleus. It localises to the host extracellular space. Its function is as follows. During virus replication, may deplete host UNG protein, and incude G2-M cell cycle arrest. Acts by targeting specific host proteins for degradation by the 26S proteasome, through association with the cellular CUL4A-DDB1 E3 ligase complex by direct interaction with host VPRPB/DCAF-1. Cell cycle arrest reportedly occurs within hours of infection and is not blocked by antiviral agents, suggesting that it is initiated by the VPR carried into the virion. Additionally, VPR induces apoptosis in a cell cycle dependent manner suggesting that these two effects are mechanistically linked. Detected in the serum and cerebrospinal fluid of AIDS patient, VPR may also induce cell death to bystander cells. Functionally, during virus entry, plays a role in the transport of the viral pre-integration (PIC) complex to the host nucleus. This function is crucial for viral infection of non-dividing macrophages. May act directly at the nuclear pore complex, by binding nucleoporins phenylalanine-glycine (FG)-repeat regions. This Human immunodeficiency virus type 1 group M subtype B (strain 89.6) (HIV-1) protein is Protein Vpr.